A 546-amino-acid polypeptide reads, in one-letter code: Chaperonin GroEL 2 (546 aa).

Residues 30 to 33 (TLGP), K51, 87 to 91 (DGTTT), G415, 479 to 481 (NAA), and D495 each bind ATP. The interval 524–546 (APKDAPPAQPAGVPGAGGTGFDF) is disordered. The span at 537–546 (PGAGGTGFDF) shows a compositional bias: gly residues.

This sequence belongs to the chaperonin (HSP60) family. In terms of assembly, forms a cylinder of 14 subunits composed of two heptameric rings stacked back-to-back. Interacts with the co-chaperonin GroES.

The protein resides in the cytoplasm. It carries out the reaction ATP + H2O + a folded polypeptide = ADP + phosphate + an unfolded polypeptide.. Together with its co-chaperonin GroES, plays an essential role in assisting protein folding. The GroEL-GroES system forms a nano-cage that allows encapsulation of the non-native substrate proteins and provides a physical environment optimized to promote and accelerate protein folding. The chain is Chaperonin GroEL 2 from Burkholderia thailandensis (strain ATCC 700388 / DSM 13276 / CCUG 48851 / CIP 106301 / E264).